The chain runs to 110 residues: Large ribosomal subunit protein uL22 (110 aa).

It belongs to the universal ribosomal protein uL22 family. In terms of assembly, part of the 50S ribosomal subunit.

Its function is as follows. This protein binds specifically to 23S rRNA; its binding is stimulated by other ribosomal proteins, e.g. L4, L17, and L20. It is important during the early stages of 50S assembly. It makes multiple contacts with different domains of the 23S rRNA in the assembled 50S subunit and ribosome. In terms of biological role, the globular domain of the protein is located near the polypeptide exit tunnel on the outside of the subunit, while an extended beta-hairpin is found that lines the wall of the exit tunnel in the center of the 70S ribosome. The sequence is that of Large ribosomal subunit protein uL22 from Shigella flexneri serotype 5b (strain 8401).